A 290-amino-acid chain; its full sequence is Nucleotide-binding protein Clos_0574 (290 aa).

8 to 15 contributes to the ATP binding site; sequence GLSGAGKS. 59-62 is a binding site for GTP; that stretch reads DIRG.

This sequence belongs to the RapZ-like family.

In terms of biological role, displays ATPase and GTPase activities. This Alkaliphilus oremlandii (strain OhILAs) (Clostridium oremlandii (strain OhILAs)) protein is Nucleotide-binding protein Clos_0574.